The chain runs to 158 residues: MQFMSSWAADDNRTLLHFSKSTLETFRQHVQASDSDCEAGGLLLGSVHGTHMLIEHATVPTAWDKRFRYLFERMPFGHEAIALARWTASQGTIRHLGEWHTHPEDNPNPSGLDRSEWNRLSAKRRDKRPTLAVIVGRNALYIELVPGSGQGSVFSPVE.

The active-site Proton donor/acceptor is the Glu-38. Zn(2+) is bound by residues His-100, His-102, and Asp-113.

Belongs to the peptidase M67B family. Cap3 isopeptidase subfamily.

Metalloprotease priming reversal component of a CBASS antivirus system. CBASS (cyclic oligonucleotide-based antiphage signaling system) provides immunity against bacteriophages. The CD-NTase protein synthesizes cyclic nucleotides in response to infection; these serve as specific second messenger signals. The signals activate a diverse range of effectors, leading to bacterial cell death and thus abortive phage infection. A type II-A(GA) CBASS system. Its function is as follows. Reverses the primed state of CdnA, the CD-NTase. In terms of biological role, the capV-cdnA-cap2-cap3 operon provides about 10(4)-fold protection in strain BWHPSA011 against infection by phage PaMx41. In P.aeruginosa strain PAO1 it confers protection against phages PaMx41 and JBD18 but not JBD67 (JBD18 and JBD67 do not replicate in BWHPSA011 / Pa011). When acb2 in JBD67 is deleted this CBASS operon then protects against JDB67 also. This CBASS system limits prophage induction of lysogenized JBD67 as well as viral lytic replication. This is CD-NTase/cGAS isopeptidase from Pseudomonas aeruginosa (strain BWHPSA011 / Pa011).